A 64-amino-acid chain; its full sequence is Toxin Tce3 (64 aa).

The LCN-type CS-alpha/beta domain occupies 1–62; the sequence is KDGYIIEHRG…IFDSNNNKCS (62 aa). Intrachain disulfides connect Cys11/Cys61, Cys15/Cys37, Cys23/Cys42, and Cys27/Cys44.

Belongs to the long (4 C-C) scorpion toxin superfamily. Sodium channel inhibitor family. Beta subfamily. As to expression, expressed by the venom gland.

It localises to the secreted. Functionally, inhibits the sodium (Nav) currents in an apparent irreversible manner. Produces small depolarization and induces repetitive firing in squid axons. Is specific for arthropods (crickets, triatomides, crabs and squids), but is non-toxic to mice. Shows antibacterial activity against both Gram-positive and Gram-negative bacteria. This Tityus cerroazul (Scorpion) protein is Toxin Tce3.